The sequence spans 590 residues: Acetylcholinesterase (590 aa).

Residues 1–24 (MREMNLLVTSSLGVLLHLVVLCQA) form the signal peptide. Asn-83 carries N-linked (GlcNAc...) asparagine glycosylation. A disulfide bridge links Cys-91 with Cys-118. The active-site Acyl-ester intermediate is the Ser-224. A disulfide bridge connects residues Cys-278 and Cys-289. The active-site Charge relay system is the Glu-351. Cysteines 426 and 545 form a disulfide. Asn-440 carries N-linked (GlcNAc...) asparagine glycosylation. His-464 functions as the Charge relay system in the catalytic mechanism. N-linked (GlcNAc...) asparagine glycosylation is found at Asn-481 and Asn-557. Residue Ser-567 is the site of GPI-anchor amidated serine attachment. The propeptide at 568-590 (SGTSSSKGIIFYVLFSILYLIFY) is removed in mature form.

It belongs to the type-B carboxylesterase/lipase family. In terms of assembly, isoform H form is a homodimer; the asymmetric form is a disulfide-bonded oligomer composed of a collagenic subunit (Q) and a variable number of T catalytic subunits. In terms of processing, an interchain disulfide bond is present in what becomes position 596 of the T isoform. Found in the synapses and to a lower extent in extrajunctional areas of muscle and nerve, and on erythrocyte membranes.

It localises to the cell membrane. Its subcellular location is the synapse. The enzyme catalyses acetylcholine + H2O = choline + acetate + H(+). Its function is as follows. Terminates signal transduction at the neuromuscular junction by rapid hydrolysis of the acetylcholine released into the synaptic cleft. May be involved in cell-cell interactions. The sequence is that of Acetylcholinesterase (ache) from Torpedo marmorata (Marbled electric ray).